A 746-amino-acid polypeptide reads, in one-letter code: NAD(P)H-quinone oxidoreductase subunit 5, chloroplastic (746 aa).

The next 16 helical transmembrane spans lie at 9-29 (WMIP…LLLF), 40-60 (WAFL…DLSI), 89-109 (IDPL…LVLI), 125-145 (FAYM…SNLI), 147-167 (VYIF…FWFT), 185-205 (GDFG…SFEF), 219-239 (NQVH…GPVA), 258-278 (TPIS…FLVA), 280-300 (LLPL…IGII), 327-347 (LGYM…FHLI), 354-374 (ALLF…VGYS), 396-416 (TTFL…CFWS), 425-445 (WLYS…TAFY), 546-566 (ILFP…IGIP), 607-627 (FSVS…KPAY), and 723-743 (LLLY…LNLL).

It belongs to the complex I subunit 5 family. NDH is composed of at least 16 different subunits, 5 of which are encoded in the nucleus.

Its subcellular location is the plastid. The protein localises to the chloroplast thylakoid membrane. The enzyme catalyses a plastoquinone + NADH + (n+1) H(+)(in) = a plastoquinol + NAD(+) + n H(+)(out). The catalysed reaction is a plastoquinone + NADPH + (n+1) H(+)(in) = a plastoquinol + NADP(+) + n H(+)(out). Its function is as follows. NDH shuttles electrons from NAD(P)H:plastoquinone, via FMN and iron-sulfur (Fe-S) centers, to quinones in the photosynthetic chain and possibly in a chloroplast respiratory chain. The immediate electron acceptor for the enzyme in this species is believed to be plastoquinone. Couples the redox reaction to proton translocation, and thus conserves the redox energy in a proton gradient. This is NAD(P)H-quinone oxidoreductase subunit 5, chloroplastic (ndhF) from Carica papaya (Papaya).